The primary structure comprises 583 residues: 2-succinyl-5-enolpyruvyl-6-hydroxy-3-cyclohexene-1-carboxylate synthase (583 aa).

This sequence belongs to the TPP enzyme family. MenD subfamily. Homodimer. Mg(2+) is required as a cofactor. Mn(2+) serves as cofactor. The cofactor is thiamine diphosphate.

It catalyses the reaction isochorismate + 2-oxoglutarate + H(+) = 5-enolpyruvoyl-6-hydroxy-2-succinyl-cyclohex-3-ene-1-carboxylate + CO2. Its pathway is quinol/quinone metabolism; 1,4-dihydroxy-2-naphthoate biosynthesis; 1,4-dihydroxy-2-naphthoate from chorismate: step 2/7. It functions in the pathway quinol/quinone metabolism; menaquinone biosynthesis. In terms of biological role, catalyzes the thiamine diphosphate-dependent decarboxylation of 2-oxoglutarate and the subsequent addition of the resulting succinic semialdehyde-thiamine pyrophosphate anion to isochorismate to yield 2-succinyl-5-enolpyruvyl-6-hydroxy-3-cyclohexene-1-carboxylate (SEPHCHC). This is 2-succinyl-5-enolpyruvyl-6-hydroxy-3-cyclohexene-1-carboxylate synthase from Roseiflexus sp. (strain RS-1).